We begin with the raw amino-acid sequence, 714 residues long: Centromere/kinetochore protein zw10 (714 aa).

Belongs to the ZW10 family.

It is found in the cytoplasm. The protein localises to the nucleus. It localises to the chromosome. Its subcellular location is the centromere. The protein resides in the kinetochore. In terms of biological role, required for accurate chromosome segregation. The sequence is that of Centromere/kinetochore protein zw10 (mit(1)15) from Drosophila grimshawi (Hawaiian fruit fly).